Reading from the N-terminus, the 441-residue chain is MGEMNGEGQIEVLENDIRTLRKQLQEKVQQLKTLKKHFQKNCITKLNNDEIARYSRQIILSEIGVQGQLKLKKASVLVVGAGGLGCPAALYLAGAGIGRIGVLDYDEVELTNLHRQLLHTEATVGLTKVTSVQSYLEQLNSQIEIETHHAQLTSENALALLEPYDVVVDATDNVATRYLLNDACVLLRKPLVSGSALQLEGQLTVYNYRGGPCYRCLFPTPPPPESVTNCGDGGVLGAITGVIGALQALETIKIILSNEGVLAGRLLLFDGQQSAFRNLKLRPKKPTCAVCSEAPTLTKLIDYEQFCGMRATDKDAALTLLEPCERISVRDYHDGWLAAGRDHLLVDVRNANQYEMCQLPGAPVNVPIEDILSNRRTEELLARAQQAQLPVYVVCRRGNDSQLAVRHLAPLFRERNLPAPRDLIGGLHAWTKTIDPNFPIY.

ATP-binding positions include glycine 83, aspartate 104, 111 to 115 (TNLHR), lysine 128, and 172 to 173 (DN). Zn(2+) contacts are provided by cysteine 213 and cysteine 216. The active-site Glycyl thioester intermediate; for adenylyltransferase activity is the cysteine 230. Zn(2+)-binding residues include cysteine 288 and cysteine 291. The region spanning 339–439 (AGRDHLLVDV…WTKTIDPNFP (101 aa)) is the Rhodanese domain. Cysteine 395 (cysteine persulfide intermediate; for sulfurtransferase activity) is an active-site residue.

The protein in the N-terminal section; belongs to the HesA/MoeB/ThiF family. UBA4 subfamily. Zn(2+) is required as a cofactor.

The protein localises to the cytoplasm. It carries out the reaction [molybdopterin-synthase sulfur-carrier protein]-C-terminal Gly-Gly + ATP + H(+) = [molybdopterin-synthase sulfur-carrier protein]-C-terminal Gly-Gly-AMP + diphosphate. The catalysed reaction is [molybdopterin-synthase sulfur-carrier protein]-C-terminal Gly-Gly-AMP + S-sulfanyl-L-cysteinyl-[cysteine desulfurase] + AH2 = [molybdopterin-synthase sulfur-carrier protein]-C-terminal-Gly-aminoethanethioate + L-cysteinyl-[cysteine desulfurase] + A + AMP + 2 H(+). It participates in tRNA modification; 5-methoxycarbonylmethyl-2-thiouridine-tRNA biosynthesis. Its pathway is cofactor biosynthesis; molybdopterin biosynthesis. Its function is as follows. Plays a central role in 2-thiolation of mcm(5)S(2)U at tRNA wobble positions of cytosolic tRNA(Lys), tRNA(Glu) and tRNA(Gln). Also essential during biosynthesis of the molybdenum cofactor. Acts by mediating the C-terminal thiocarboxylation of sulfur carriers URM1 and MOCS2A. Its N-terminus first activates URM1 and MOCS2A as acyl-adenylates (-COAMP), then the persulfide sulfur on the catalytic cysteine is transferred to URM1 and MOCS2A to form thiocarboxylation (-COSH) of their C-terminus. The reaction probably involves hydrogen sulfide that is generated from the persulfide intermediate and that acts as a nucleophile towards URM1 and MOCS2A. Subsequently, a transient disulfide bond is formed. Does not use thiosulfate as sulfur donor; NFS1 probably acting as a sulfur donor for thiocarboxylation reactions. This chain is Adenylyltransferase and sulfurtransferase MOCS3, found in Anopheles gambiae (African malaria mosquito).